We begin with the raw amino-acid sequence, 214 residues long: Guanylate kinase (214 aa).

The Guanylate kinase-like domain maps to 6-192 (GTLYIISAPS…ALEDLKAIFR (187 aa)). 13–20 (APSGAGKT) contacts ATP.

Belongs to the guanylate kinase family.

It localises to the cytoplasm. The enzyme catalyses GMP + ATP = GDP + ADP. Its function is as follows. Essential for recycling GMP and indirectly, cGMP. This chain is Guanylate kinase, found in Pseudomonas syringae pv. syringae (strain B728a).